A 123-amino-acid polypeptide reads, in one-letter code: Small ribosomal subunit protein uS13 (123 aa).

Residues 93–123 (HRKGLPVRGQNTKNNARTRKGPAKAIAGKKK) are disordered. Over residues 108–123 (ARTRKGPAKAIAGKKK) the composition is skewed to basic residues.

It belongs to the universal ribosomal protein uS13 family. As to quaternary structure, part of the 30S ribosomal subunit. Forms a loose heterodimer with protein S19. Forms two bridges to the 50S subunit in the 70S ribosome.

Located at the top of the head of the 30S subunit, it contacts several helices of the 16S rRNA. In the 70S ribosome it contacts the 23S rRNA (bridge B1a) and protein L5 of the 50S subunit (bridge B1b), connecting the 2 subunits; these bridges are implicated in subunit movement. Contacts the tRNAs in the A and P-sites. The sequence is that of Small ribosomal subunit protein uS13 from Leuconostoc mesenteroides subsp. mesenteroides (strain ATCC 8293 / DSM 20343 / BCRC 11652 / CCM 1803 / JCM 6124 / NCDO 523 / NBRC 100496 / NCIMB 8023 / NCTC 12954 / NRRL B-1118 / 37Y).